Reading from the N-terminus, the 854-residue chain is Discoidin domain-containing receptor 2 (854 aa).

An N-terminal signal peptide occupies residues 1–21 (MIPIPRMPLVLLLLLLILGSA). At 22-399 (KAQVNPAICR…MLKVDDSNTR (378 aa)) the chain is on the extracellular side. One can recognise an F5/8 type C domain in the interval 30–185 (CRYPLGMSGG…VCMRVELYGC (156 aa)). 2 disulfides stabilise this stretch: cysteine 30/cysteine 185 and cysteine 73/cysteine 177. N-linked (GlcNAc...) asparagine glycans are attached at residues asparagine 121, asparagine 213, asparagine 261, asparagine 280, and asparagine 372. The helical transmembrane segment at 400-421 (ILIGCLVAIIFILLAIIVIILW) threads the bilayer. Topologically, residues 422–854 (RQFWQKMLEK…HLLLLQQGAE (433 aa)) are cytoplasmic. The tract at residues 452–471 (SMFNNNRSSSPSEQESNSTY) is disordered. The segment covering 455-469 (NNNRSSSPSEQESNS) has biased composition (low complexity). The residue at position 471 (tyrosine 471) is a Phosphotyrosine; by SRC and autocatalysis. One can recognise a Protein kinase domain in the interval 563–848 (LAFKEKLGEG…PSFQEIHLLL (286 aa)). Residues 569 to 577 (LGEGQFGEV) and lysine 608 contribute to the ATP site. Aspartate 709 serves as the catalytic Proton acceptor. Tyrosine 735, tyrosine 739, and tyrosine 740 each carry phosphotyrosine; by SRC and autocatalysis.

The protein belongs to the protein kinase superfamily. Tyr protein kinase family. Insulin receptor subfamily. As to quaternary structure, binds hydroxyproline-rich sequence motifs in fibrillar, glycosylated collagen, such as the GQOGVMGFO motif, where O stands for hydroxyproline. Interacts with SRC. Interacts (tyrosine phosphorylated) with SHC1. N-glycosylated. In terms of processing, tyrosine phosphorylated in response to collagen binding. Phosphorylated by SRC; this is required for activation and subsequent autophosphorylation on additional tyrosine residues. In terms of tissue distribution, widely expressed. Detected in lung, ovary, skin and in testis Leydig cells (at protein level). Widely expressed. Detected at high levels in heart, lung, skeletal muscle, central nervous system (CNS) and kidney, and at lower levels in brain and testis. Detected in chondrocytes in tibia growth plates of young mice.

The protein resides in the cell membrane. The enzyme catalyses L-tyrosyl-[protein] + ATP = O-phospho-L-tyrosyl-[protein] + ADP + H(+). With respect to regulation, present in an inactive state in the absence of collagen binding and phosphorylation by SRC. Tyrosine phosphorylation enhances the affinity for ATP and the catalytic activity. Its function is as follows. Tyrosine kinase that functions as a cell surface receptor for fibrillar collagen and regulates cell differentiation, remodeling of the extracellular matrix, cell migration and cell proliferation. Required for normal bone development. Regulates osteoblast differentiation and chondrocyte maturation via a signaling pathway that involves MAP kinases and leads to the activation of the transcription factor RUNX2. Regulates remodeling of the extracellular matrix by up-regulation of the collagenases MMP1, MMP2 and MMP13, and thereby facilitates cell migration and tumor cell invasion. Promotes fibroblast migration and proliferation, and thereby contributes to cutaneous wound healing. The protein is Discoidin domain-containing receptor 2 (Ddr2) of Mus musculus (Mouse).